The primary structure comprises 231 residues: Killer cell lectin-like receptor subfamily F member 1 (231 aa).

At 1–38 the chain is on the cytoplasmic side; sequence MQDEERYMTLNVQSKKRSSAQTSQLTFKDYSVTLHWYK. Y7 carries the phosphotyrosine modification. The helical; Signal-anchor for type II membrane protein transmembrane segment at 39–59 threads the bilayer; sequence ILLGISGTVNGILTLTLISLI. Residues 60-231 are Extracellular-facing; it reads LLVSQGVLLK…SSVFKWICQY (172 aa). N-linked (GlcNAc...) asparagine glycosylation is found at N77, N91, N96, and N176. Positions 121–230 constitute a C-type lectin domain; it reads YQGKCYWFSN…CSSVFKWICQ (110 aa). 2 cysteine pairs are disulfide-bonded: C142–C229 and C208–C221.

In terms of assembly, homodimer. Interacts with CLEC2B. Phosphorylated on Tyr-7; this phosphorylation is required for NKp80/KLRF1-mediated cytotoxicity. Strongly expressed in peripheral blood leukocytes and spleen, with weaker expression in lymph node and adult liver, and no expression detected in bone marrow, thymus, and fetal liver. Not expressed in brain, heart, placenta, lung, kidney, skeletal muscle, and pancreas. Within peripheral blood leukocyte and immunocyte cell lines, expression was predominant in NK cells but was also detected in monocytes.

It localises to the membrane. Its function is as follows. Functions as an activating receptor involved in immunosurveillance upon binding to various ligands displayed at the surface of myeloid cells. Upon interaction with CLEC2B ligand, stimulates NK-cell cytotoxicity and cytokine production leading to the cytolysis of malignant CLEC2B-expressing myeloid cells. Actviation of the common cytotoxicity pathway involves SRC and SYK kinases. This Homo sapiens (Human) protein is Killer cell lectin-like receptor subfamily F member 1 (KLRF1).